The sequence spans 84 residues: Toxin BmKaTx16 (84 aa).

The first 19 residues, Met-1 to Ser-19, serve as a signal peptide directing secretion. The LCN-type CS-alpha/beta domain maps to Arg-21–His-83. Disulfide bonds link Cys-31/Cys-82, Cys-35/Cys-55, Cys-41/Cys-65, and Cys-45/Cys-67. A propeptide (removed by a carboxypeptidase) is located at residue Arg-84.

Belongs to the long (4 C-C) scorpion toxin superfamily. Sodium channel inhibitor family. Alpha subfamily. Expressed by the venom gland.

It is found in the secreted. Its function is as follows. Alpha toxins bind voltage-independently at site-3 of sodium channels (Nav) and inhibit the inactivation of the activated channels, thereby blocking neuronal transmission. This Olivierus martensii (Manchurian scorpion) protein is Toxin BmKaTx16.